Here is a 344-residue protein sequence, read N- to C-terminus: Biotin synthase (344 aa).

The 225-residue stretch at Asn-36 to Ser-260 folds into the Radical SAM core domain. The [4Fe-4S] cluster site is built by Cys-51, Cys-55, and Cys-58. [2Fe-2S] cluster contacts are provided by Cys-95, Cys-126, Cys-186, and Arg-258.

Belongs to the radical SAM superfamily. Biotin synthase family. As to quaternary structure, homodimer. It depends on [4Fe-4S] cluster as a cofactor. [2Fe-2S] cluster is required as a cofactor.

The catalysed reaction is (4R,5S)-dethiobiotin + (sulfur carrier)-SH + 2 reduced [2Fe-2S]-[ferredoxin] + 2 S-adenosyl-L-methionine = (sulfur carrier)-H + biotin + 2 5'-deoxyadenosine + 2 L-methionine + 2 oxidized [2Fe-2S]-[ferredoxin]. Its pathway is cofactor biosynthesis; biotin biosynthesis; biotin from 7,8-diaminononanoate: step 2/2. Functionally, catalyzes the conversion of dethiobiotin (DTB) to biotin by the insertion of a sulfur atom into dethiobiotin via a radical-based mechanism. This chain is Biotin synthase, found in Buchnera aphidicola subsp. Baizongia pistaciae (strain Bp).